Consider the following 243-residue polypeptide: Triosephosphate isomerase (243 aa).

9–11 provides a ligand contact to substrate; that stretch reads NWK. His-96 serves as the catalytic Electrophile. Catalysis depends on Glu-165, which acts as the Proton acceptor. Residues Gly-171, Ser-204, and 225–226 each bind substrate; that span reads GG.

Belongs to the triosephosphate isomerase family. In terms of assembly, homodimer.

Its subcellular location is the cytoplasm. It catalyses the reaction D-glyceraldehyde 3-phosphate = dihydroxyacetone phosphate. Its pathway is carbohydrate biosynthesis; gluconeogenesis. The protein operates within carbohydrate degradation; glycolysis; D-glyceraldehyde 3-phosphate from glycerone phosphate: step 1/1. Functionally, involved in the gluconeogenesis. Catalyzes stereospecifically the conversion of dihydroxyacetone phosphate (DHAP) to D-glyceraldehyde-3-phosphate (G3P). This Prochlorococcus marinus (strain MIT 9313) protein is Triosephosphate isomerase.